The sequence spans 860 residues: M-phase phosphoprotein 8 (860 aa).

N-acetylmethionine is present on methionine 1. Residues serine 51, serine 85, serine 136, and serine 138 each carry the phosphoserine modification. Positions 59-118 constitute a Chromo domain; it reads FEVEKILDMKTEGGKVLYKVRWKGYTSDDDTWEPEIHLEDCKEVLLEFRKKIAENKAKAV. The segment at 80-87 is histone H3K9me3 binding; it reads WKGYTSDD. Residues 129 to 141 show a composition bias toward polar residues; that stretch reads NDIFEANSDSDQQ. The interval 129 to 191 is disordered; the sequence is NDIFEANSDS…SKPDLESSLE (63 aa). Threonine 144 carries the post-translational modification Phosphothreonine. Residues serine 149 and serine 164 each carry the phosphoserine; by CDK1 modification. 2 stretches are compositionally biased toward basic and acidic residues: residues 159–169 and 177–186; these read QREEKSPDDLK and KLKDKSKPDL. Residues serine 188, serine 189, and serine 192 each carry the phosphoserine modification. The span at 206–249 shows a compositional bias: basic and acidic residues; the sequence is AKEELKESKKPKKDEVKETKELKKVKKGEIRDLKTKTREDPKEN. Positions 206-440 are disordered; sequence AKEELKESKK…GRKEPKGLKT (235 aa). A compositionally biased stretch (low complexity) spans 259-268; sequence ESQVESESSV. Residues serine 266, serine 272, and serine 279 each carry the phosphoserine modification. The segment covering 280 to 314 has biased composition (basic and acidic residues); that stretch reads EGLHSDSREEKQNTKSARERAGQDMGLEHGFEKPL. The residue at position 319 (serine 319) is a Phosphoserine. A Phosphothreonine; by CDK1 modification is found at threonine 334. The span at 336-377 shows a compositional bias: basic and acidic residues; it reads RKAEDTRENRKLENKNAFLEKKTVPKKQRNQDRSKSAAELEK. Threonine 385 carries the post-translational modification Phosphothreonine; by CDK1. Residues serine 392, serine 400, and serine 403 each carry the phosphoserine modification. Residues 408–440 show a composition bias toward basic and acidic residues; sequence KETKRNESKEKYQKRHDSDKEEKGRKEPKGLKT. The segment at 431 to 560 is interaction with humanin; that stretch reads GRKEPKGLKT…HLDGKDENFA (130 aa). Threonine 454 bears the Phosphothreonine mark. Residues 458-496 are disordered; that stretch reads KNDVSENNRKREEIPLDFKTIDDHKTKENKQSLKERRNT. ANK repeat units lie at residues 600 to 629, 633 to 662, 666 to 695, and 699 to 728; these read SGMT…KVNG, NGTT…FVNV, NGET…DCNI, and HQNS…TLSR.

As to quaternary structure, homodimer. Interacts (via chromo domain) with histone H3K9me3. Has the highest affinity for H3K9me3, and lesser affinity for H3K9me2 and H3K9me1. Component of the HUSH complex; at least composed of TASOR, PPHLN1 and MPHOSPH8. Interacts with DNMT3, EHMT1 and SETDB1. Interacts with MORC2; the interaction associateS MORC2 with the HUSH complex which recruits MORC2 to heterochromatic loci. Interacts with ZNF638; leading to recruitment of the HUSH complex to unintegrated retroviral DNA. Interacts with TASOR. Interacts with humanin. Phosphorylated in M (mitotic) phase. Phosphorylation by CDK1 promotes dissociation from chromatin.

Its subcellular location is the nucleus. It localises to the chromosome. Its function is as follows. Heterochromatin component that specifically recognizes and binds methylated 'Lys-9' of histone H3 (H3K9me) and promotes recruitment of proteins that mediate epigenetic repression. Mediates recruitment of the HUSH complex to H3K9me3 sites: the HUSH complex is recruited to genomic loci rich in H3K9me3 and is required to maintain transcriptional silencing by promoting recruitment of SETDB1, a histone methyltransferase that mediates further deposition of H3K9me3, as well as MORC2. Binds H3K9me and promotes DNA methylation by recruiting DNMT3A to target CpG sites; these can be situated within the coding region of the gene. Mediates down-regulation of CDH1 expression. Also represses L1 retrotransposons in collaboration with MORC2 and, probably, SETDB1, the silencing is dependent of repressive epigenetic modifications, such as H3K9me3 mark. Silencing events often occur within introns of transcriptionally active genes, and lead to the down-regulation of host gene expression. The HUSH complex is also involved in the silencing of unintegrated retroviral DNA by being recruited by ZNF638: some part of the retroviral DNA formed immediately after infection remains unintegrated in the host genome and is transcriptionally repressed. The polypeptide is M-phase phosphoprotein 8 (Homo sapiens (Human)).